The sequence spans 301 residues: Rhodopsin (301 aa).

At 1–18 (LHMIHLHWYQYPPMNPMM) the chain is on the extracellular side. A helical membrane pass occupies residues 19–43 (YPLLLIFMLFTGILCLAGNFVTIWV). At 44–55 (FMNTKSLRTPAN) the chain is on the cytoplasmic side. The helical transmembrane segment at 56-78 (LLVVNLAMSDFLMMFTMFPPMMV) threads the bilayer. Topologically, residues 79-92 (TCYYHTWTLGPTFC) are extracellular. Cysteine 92 and cysteine 169 are joined by a disulfide. A helical transmembrane segment spans residues 93–115 (QVYAFLGNLCGCASIWTMVFITF). The 'Ionic lock' involved in activated form stabilization motif lies at 116-118 (DRY). The Cytoplasmic portion of the chain corresponds to 116-134 (DRYNVIVKGVAGEPLSTKK). The chain crosses the membrane as a helical span at residues 135–155 (ASLWILTIWVLSTTWCIAPFF). At 156–182 (GWNHYVPEGNLTGCGTDYLSEDILSRS) the chain is on the extracellular side. The N-linked (GlcNAc...) asparagine glycan is linked to asparagine 165. Residues 183-204 (YLYVYSTWVYFLPLAITIYCYV) traverse the membrane as a helical segment. Topologically, residues 205–245 (FIIKAVAAHEKGMRDQAKKMGIKSLRNEEAQKTSAECRLAK) are cytoplasmic. Residues 246–267 (IAMTTVALWFIAWTPCLLINWV) form a helical membrane-spanning segment. Residues 268–278 (GMFARSYLSPV) lie on the Extracellular side of the membrane. Residues 279-300 (YTIWGYVFAKANAVYNPIVYAI) form a helical membrane-spanning segment. Lysine 288 is subject to N6-(retinylidene)lysine.

This sequence belongs to the G-protein coupled receptor 1 family. Opsin subfamily. Homodimer. Interacts with GNAQ. Post-translationally, contains one covalently linked retinal chromophore.

The protein resides in the cell projection. Its subcellular location is the rhabdomere membrane. Photoreceptor required for image-forming vision at low light intensity. Can use both retinal and 3-dehydroretinal as visual pigment. Light-induced isomerization of 11-cis to all-trans retinal triggers a conformational change that activates signaling via G-proteins. Signaling via GNAQ probably mediates the activation of phospholipase C. This is Rhodopsin (RHO) from Procambarus seminolae (Crayfish).